The primary structure comprises 244 residues: Protein-L-isoaspartate O-methyltransferase (244 aa).

The tract at residues 1 to 39 (MINPFSSFRWRHSSRSPAGIPEVEPQPPDASDPFASQRE) is disordered. The active site involves serine 92.

It belongs to the methyltransferase superfamily. L-isoaspartyl/D-aspartyl protein methyltransferase family.

It localises to the cytoplasm. It carries out the reaction [protein]-L-isoaspartate + S-adenosyl-L-methionine = [protein]-L-isoaspartate alpha-methyl ester + S-adenosyl-L-homocysteine. Functionally, catalyzes the methyl esterification of L-isoaspartyl residues in peptides and proteins that result from spontaneous decomposition of normal L-aspartyl and L-asparaginyl residues. It plays a role in the repair and/or degradation of damaged proteins. The sequence is that of Protein-L-isoaspartate O-methyltransferase from Synechococcus sp. (strain JA-2-3B'a(2-13)) (Cyanobacteria bacterium Yellowstone B-Prime).